We begin with the raw amino-acid sequence, 1328 residues long: Peroxidasin homolog pxn-2 (1328 aa).

The signal sequence occupies residues 1-16 (MLLEFLLLIGISLSTA). Residues 17–45 (CPSECRCAGLDVHCEGKNLTAIPGHIPIA) form the LRRNT domain. The N-linked (GlcNAc...) asparagine glycan is linked to Asn-34. 6 LRR repeats span residues 42–66 (IPIATTNLYFSNNLLNSLSKSNFQA), 67–90 (LPNLQYLDLSNNSIRDIEETLLDS), 92–114 (PGLKYLDLSWNKIRYVPKLSTAP), 116–137 (ALVSLNLVHNEISRLDNDLVSH), 138–161 (SPYMQTFLIQRNRIQSLPHDFFNS), and 164–191 (VPTLKTVKMAGNPWSCDCRMVNVKQFAD). N-linked (GlcNAc...) asparagine glycosylation is present at Asn-77. Asn-220 carries an N-linked (GlcNAc...) asparagine glycan. The disordered stretch occupies residues 305-332 (KKMQASSSTEPPITTTTMEPMTTSTMDS). Residues 310 to 332 (SSSTEPPITTTTMEPMTTSTMDS) are compositionally biased toward low complexity. Ig-like C2-type domains follow at residues 346–438 (PEID…FSVS) and 445–532 (PVII…ANLL). A disulfide bridge connects residues Cys-373 and Cys-422. Asn-403 and Asn-455 each carry an N-linked (GlcNAc...) asparagine glycan. Residues Cys-466 and Cys-516 are joined by a disulfide bond. Residue Asn-630 is glycosylated (N-linked (GlcNAc...) asparagine). Cys-660 and Cys-676 are oxidised to a cystine. Asp-754 is a binding site for heme b. The active-site Proton acceptor is the His-755. Asp-756 serves as a coordination point for Ca(2+). Disulfide bonds link Cys-775–Cys-785 and Cys-779–Cys-807. Asn-776 is a glycosylation site (N-linked (GlcNAc...) asparagine). Residues Thr-839, Tyr-841, Asp-843, and Ser-845 each coordinate Ca(2+). Asn-894 carries N-linked (GlcNAc...) asparagine glycosylation. Heme b contacts are provided by Glu-913 and His-1008. One copy of the LRR 7 repeat lies at 1085 to 1109 (ALDLAALNIQRGRDHGLPSWTEYRK). Cystine bridges form between Cys-1111–Cys-1168 and Cys-1209–Cys-1236. Residues Asn-1112 and Asn-1128 are each glycosylated (N-linked (GlcNAc...) asparagine). One copy of the LRR 8 repeat lies at 1204-1225 (LSKIICTNGDDIDRIQRDIFVY). The N-linked (GlcNAc...) asparagine glycan is linked to Asn-1228. The disordered stretch occupies residues 1266–1297 (IGGDEKAKRRKRRHHHSKKSCHDKGKRRKSGD). The segment covering 1273-1295 (KRRKRRHHHSKKSCHDKGKRRKS) has biased composition (basic residues). An N-linked (GlcNAc...) asparagine glycan is attached at Asn-1300.

The protein belongs to the peroxidase family. XPO subfamily. The cofactor is Ca(2+). It depends on heme b as a cofactor. In terms of tissue distribution, expressed in vulval muscles and in some neurons including PVQ. Expressed in the hypodermis and in coelomocytes.

The protein resides in the secreted. The protein localises to the extracellular space. Its subcellular location is the extracellular matrix. It is found in the basement membrane. The enzyme catalyses L-lysyl-[collagen] + L-methionyl-[collagen] + H2O2 = [collagen]-L-lysyl-N-S-L-methionyl-[collagen] + 2 H2O + H(+). The catalysed reaction is bromide + H2O2 = hypobromite + H2O. It carries out the reaction L-lysyl-[collagen] + L-methionyl-[collagen] + hypobromite = [collagen]-L-lysyl-N-S-L-methionyl-[collagen] + bromide + H2O + H(+). It catalyses the reaction L-tyrosyl-[protein] + bromide + H2O2 + H(+) = 3-bromo-L-tyrosyl-[protein] + 2 H2O. The enzyme catalyses hypobromite + L-tyrosyl-[protein] + H(+) = 3-bromo-L-tyrosyl-[protein] + H2O. In terms of biological role, catalyzes the two-electron oxidation of bromide by hydrogen peroxide and generates hypobromite as a reactive intermediate which mediates the formation of sulfilimine cross-links between methionine and hydroxylysine residues within an uncross-linked collagen IV/COL4A1 NC1 hexamer. Required for embryonic morphogenesis playing a role in epidermal elongation at the twofold stage of embryonic development. Required post-embryonically for basement membrane integrity and muscle-epidermal attachments, and specifically in the function of basement membrane components such as the type IV collagens. May have a role in inhibiting axon regeneration. May functionally antagonize the peroxidasin pxn-1. The polypeptide is Peroxidasin homolog pxn-2 (Caenorhabditis elegans).